A 450-amino-acid chain; its full sequence is MGKYFGTDGVRGEANLELTPELAFKLGRFGGYVLSQHETEAPKVFVGRDTRISGEMLESALVAGLLSVGIHVYKLGVLATPAVAYLVETEGASAGVMISASHNPALDNGIKFFGGDGFKLDDEKEAEIEALLDAEEDTLPRPSAEGLGILVDYPEGLRKYEGYLVSTGTPLDGMKVALDTANGAASTSARQIFADLGAQLTVIGETPDGLNINLNVGSTHPEALQEVVKESGSAIGLAFDGDSDRLIAVDENGDIVDGDKIMYIIGKYLSEKGQLAQNTIVTTVMSNLGFHKALNREGINKAVTAVGDRYVVEEMRKSGYNLGGEQSGHVILMDYNTTGDGQLSAVQLTKIMKETGKSLSELAAEVTIYPQKLVNIRVENVMKEKAMEVPAIKAIIEKMEEEMAGNGRILVRPSGTEPLLRVMAEAPTTEEVDYYVDTITDVVRAEIGID.

The active-site Phosphoserine intermediate is the S101. Mg(2+)-binding residues include S101, D240, D242, and D244. Phosphoserine is present on S101.

It belongs to the phosphohexose mutase family. Mg(2+) is required as a cofactor. Activated by phosphorylation.

It carries out the reaction alpha-D-glucosamine 1-phosphate = D-glucosamine 6-phosphate. Catalyzes the conversion of glucosamine-6-phosphate to glucosamine-1-phosphate. The protein is Phosphoglucosamine mutase of Streptococcus pneumoniae (strain JJA).